Reading from the N-terminus, the 161-residue chain is Phosphopantetheine adenylyltransferase (161 aa).

Position 9 (threonine 9) interacts with substrate. ATP is bound by residues 9-10 (TF) and histidine 17. Lysine 41, leucine 73, and arginine 87 together coordinate substrate. Residues 88–90 (GLR), glutamate 98, and 123–129 (YQFISGT) contribute to the ATP site.

The protein belongs to the bacterial CoaD family. As to quaternary structure, homohexamer. Requires Mg(2+) as cofactor.

The protein localises to the cytoplasm. It catalyses the reaction (R)-4'-phosphopantetheine + ATP + H(+) = 3'-dephospho-CoA + diphosphate. It participates in cofactor biosynthesis; coenzyme A biosynthesis; CoA from (R)-pantothenate: step 4/5. Functionally, reversibly transfers an adenylyl group from ATP to 4'-phosphopantetheine, yielding dephospho-CoA (dPCoA) and pyrophosphate. The chain is Phosphopantetheine adenylyltransferase from Janthinobacterium sp. (strain Marseille) (Minibacterium massiliensis).